The sequence spans 202 residues: LexA repressor (202 aa).

Positions 28–48 form a DNA-binding region, H-T-H motif; sequence RAEIAQRLGFRSPNAAEEHLK. Catalysis depends on for autocatalytic cleavage activity residues Ser119 and Lys156.

Belongs to the peptidase S24 family. In terms of assembly, homodimer.

The enzyme catalyses Hydrolysis of Ala-|-Gly bond in repressor LexA.. Its function is as follows. Represses a number of genes involved in the response to DNA damage (SOS response), including recA and lexA. Binds to the 16 bp palindromic sequence 5'-CTGTATATATATACAG-3'. In the presence of single-stranded DNA, RecA interacts with LexA causing an autocatalytic cleavage which disrupts the DNA-binding part of LexA, leading to derepression of the SOS regulon and eventually DNA repair. This chain is LexA repressor, found in Citrobacter koseri (strain ATCC BAA-895 / CDC 4225-83 / SGSC4696).